The sequence spans 99 residues: Aspartyl/glutamyl-tRNA(Asn/Gln) amidotransferase subunit C (99 aa).

This sequence belongs to the GatC family. In terms of assembly, heterotrimer of A, B and C subunits.

The catalysed reaction is L-glutamyl-tRNA(Gln) + L-glutamine + ATP + H2O = L-glutaminyl-tRNA(Gln) + L-glutamate + ADP + phosphate + H(+). The enzyme catalyses L-aspartyl-tRNA(Asn) + L-glutamine + ATP + H2O = L-asparaginyl-tRNA(Asn) + L-glutamate + ADP + phosphate + 2 H(+). Allows the formation of correctly charged Asn-tRNA(Asn) or Gln-tRNA(Gln) through the transamidation of misacylated Asp-tRNA(Asn) or Glu-tRNA(Gln) in organisms which lack either or both of asparaginyl-tRNA or glutaminyl-tRNA synthetases. The reaction takes place in the presence of glutamine and ATP through an activated phospho-Asp-tRNA(Asn) or phospho-Glu-tRNA(Gln). The sequence is that of Aspartyl/glutamyl-tRNA(Asn/Gln) amidotransferase subunit C from Burkholderia vietnamiensis (strain G4 / LMG 22486) (Burkholderia cepacia (strain R1808)).